A 186-amino-acid polypeptide reads, in one-letter code: ATP synthase subunit delta (186 aa).

This sequence belongs to the ATPase delta chain family. In terms of assembly, F-type ATPases have 2 components, F(1) - the catalytic core - and F(0) - the membrane proton channel. F(1) has five subunits: alpha(3), beta(3), gamma(1), delta(1), epsilon(1). F(0) has three main subunits: a(1), b(2) and c(10-14). The alpha and beta chains form an alternating ring which encloses part of the gamma chain. F(1) is attached to F(0) by a central stalk formed by the gamma and epsilon chains, while a peripheral stalk is formed by the delta and b chains.

Its subcellular location is the cell inner membrane. In terms of biological role, f(1)F(0) ATP synthase produces ATP from ADP in the presence of a proton or sodium gradient. F-type ATPases consist of two structural domains, F(1) containing the extramembraneous catalytic core and F(0) containing the membrane proton channel, linked together by a central stalk and a peripheral stalk. During catalysis, ATP synthesis in the catalytic domain of F(1) is coupled via a rotary mechanism of the central stalk subunits to proton translocation. Its function is as follows. This protein is part of the stalk that links CF(0) to CF(1). It either transmits conformational changes from CF(0) to CF(1) or is implicated in proton conduction. This is ATP synthase subunit delta from Fuscovulum blasticum (Rhodobacter blasticus).